A 134-amino-acid polypeptide reads, in one-letter code: Large ribosomal subunit protein bL20 (134 aa).

This sequence belongs to the bacterial ribosomal protein bL20 family.

Its function is as follows. Binds directly to 23S ribosomal RNA and is necessary for the in vitro assembly process of the 50S ribosomal subunit. It is not involved in the protein synthesizing functions of that subunit. This Rhizobium meliloti (strain 1021) (Ensifer meliloti) protein is Large ribosomal subunit protein bL20.